A 338-amino-acid chain; its full sequence is Methionyl-tRNA formyltransferase (338 aa).

110–113 (SLLP) contacts (6S)-5,6,7,8-tetrahydrofolate.

It belongs to the Fmt family.

It catalyses the reaction L-methionyl-tRNA(fMet) + (6R)-10-formyltetrahydrofolate = N-formyl-L-methionyl-tRNA(fMet) + (6S)-5,6,7,8-tetrahydrofolate + H(+). Its function is as follows. Attaches a formyl group to the free amino group of methionyl-tRNA(fMet). The formyl group appears to play a dual role in the initiator identity of N-formylmethionyl-tRNA by promoting its recognition by IF2 and preventing the misappropriation of this tRNA by the elongation apparatus. In Parasynechococcus marenigrum (strain WH8102), this protein is Methionyl-tRNA formyltransferase.